Consider the following 299-residue polypeptide: Bifunctional protein FolD 1 (299 aa).

NADP(+) contacts are provided by residues 168 to 170 (GRS), Ser193, and Ile234.

It belongs to the tetrahydrofolate dehydrogenase/cyclohydrolase family. In terms of assembly, homodimer.

The enzyme catalyses (6R)-5,10-methylene-5,6,7,8-tetrahydrofolate + NADP(+) = (6R)-5,10-methenyltetrahydrofolate + NADPH. The catalysed reaction is (6R)-5,10-methenyltetrahydrofolate + H2O = (6R)-10-formyltetrahydrofolate + H(+). The protein operates within one-carbon metabolism; tetrahydrofolate interconversion. Functionally, catalyzes the oxidation of 5,10-methylenetetrahydrofolate to 5,10-methenyltetrahydrofolate and then the hydrolysis of 5,10-methenyltetrahydrofolate to 10-formyltetrahydrofolate. This is Bifunctional protein FolD 1 from Mesorhizobium japonicum (strain LMG 29417 / CECT 9101 / MAFF 303099) (Mesorhizobium loti (strain MAFF 303099)).